We begin with the raw amino-acid sequence, 524 residues long: B3 domain-containing protein Os07g0183700 (524 aa).

Disordered regions lie at residues 94–152 and 191–232; these read DGEG…TSVS and PLQP…FQTQ. The segment covering 100–109 has biased composition (pro residues); sequence CAPPPSPIPA. 2 stretches are compositionally biased toward low complexity: residues 110 to 124 and 200 to 232; these read GPASSTVSAASSAPA and AAAAAGSPSATTPEPGHGEATPTTSSSAQFQTQ. The TF-B3 DNA-binding region spans 336–434; that stretch reads SFVKPLTYTD…EMFMAVRRTR (99 aa).

Its subcellular location is the nucleus. This Oryza sativa subsp. japonica (Rice) protein is B3 domain-containing protein Os07g0183700.